Consider the following 474-residue polypeptide: Pyruvate kinase (474 aa).

R33 is a substrate binding site. N35, S37, and D67 together coordinate K(+). Residue 35–38 coordinates ATP; it reads NFSH. Residues R74 and K155 each coordinate ATP. Residue E220 coordinates Mg(2+). Substrate-binding residues include G243, D244, and T276. Mg(2+) is bound at residue D244.

Belongs to the pyruvate kinase family. Homotetramer. Requires Mg(2+) as cofactor. K(+) is required as a cofactor.

The catalysed reaction is pyruvate + ATP = phosphoenolpyruvate + ADP + H(+). It functions in the pathway carbohydrate degradation; glycolysis; pyruvate from D-glyceraldehyde 3-phosphate: step 5/5. This Corynebacterium efficiens (strain DSM 44549 / YS-314 / AJ 12310 / JCM 11189 / NBRC 100395) protein is Pyruvate kinase (pyk).